Here is a 274-residue protein sequence, read N- to C-terminus: 3',5'-cyclic adenosine monophosphate phosphodiesterase CpdA (274 aa).

Asp-21, His-23, Asp-63, Asn-93, His-163, His-202, and His-204 together coordinate Fe cation. AMP contacts are provided by residues His-23, Asp-63, and 93–94 (NH). AMP is bound at residue His-204.

It belongs to the cyclic nucleotide phosphodiesterase class-III family. It depends on Fe(2+) as a cofactor.

The catalysed reaction is 3',5'-cyclic AMP + H2O = AMP + H(+). In terms of biological role, hydrolyzes cAMP to 5'-AMP. Plays an important regulatory role in modulating the intracellular concentration of cAMP, thereby influencing cAMP-dependent processes. The protein is 3',5'-cyclic adenosine monophosphate phosphodiesterase CpdA of Vibrio vulnificus (strain CMCP6).